A 424-amino-acid polypeptide reads, in one-letter code: MGGMTIAEKILATHAGKEEVKPGEIVLAKVDFMFGNDVTTPLAIKTFRKIGVEKVFDPERIAIVLDHFTPNKDIKAAEQCKFSREFAREQGIKWFFEGGNVGVEHCLLPELGLVLPGELIIGADSHTCTYGALGAFATGVGSTDLAVAMATGEAWFRVPETIKFVYEGDLQPWVTSKDLILYTIGDIGVNGALYKVMEFSGEVIEKLSVEQRMTMTNMAIEAGAKTGIIEPDKKTIEYVKGRAKREYKIYKSDEDAKYYKVIEYDVSKIEPQVAFPHLPENTVPISKAAKMNIKIDQVVIGSCTNGRLEDLRMAAEVLEGQKVAPWVRLIILPCSPTVYFKAMKEGLLEIFLEAGAVIGPPTCGPCLGGHMGILASGERAVSTTNRNFVGRMGHPKSEVYLASPYVAAASAILGRIASPEEVVK.

C303, C363, and C366 together coordinate [4Fe-4S] cluster.

It belongs to the aconitase/IPM isomerase family. LeuC type 2 subfamily. As to quaternary structure, heterodimer of LeuC and LeuD. [4Fe-4S] cluster is required as a cofactor.

The catalysed reaction is (2R,3S)-3-isopropylmalate = (2S)-2-isopropylmalate. Its pathway is amino-acid biosynthesis; L-leucine biosynthesis; L-leucine from 3-methyl-2-oxobutanoate: step 2/4. In terms of biological role, catalyzes the isomerization between 2-isopropylmalate and 3-isopropylmalate, via the formation of 2-isopropylmaleate. In Pyrococcus furiosus (strain ATCC 43587 / DSM 3638 / JCM 8422 / Vc1), this protein is 3-isopropylmalate dehydratase large subunit 1.